Reading from the N-terminus, the 622-residue chain is Low affinity potassium transport system protein Kup (622 aa).

The next 12 membrane-spanning stretches (helical) occupy residues 9–29, 49–69, 103–123, 137–157, 165–185, 213–233, 247–267, 276–296, 337–357, 363–383, 396–416, and 419–439; these read LPAI…TSPL, VFGF…IKYL, VIMG…TPAI, PQLD…LFMI, VGKL…GLGL, VSFI…VLYA, WFTV…ALLL, PFFL…AALA, IYIP…IVSF, LAAA…ILST, FVAL…TANL, and LLSG…VMTT.

It belongs to the HAK/KUP transporter (TC 2.A.72) family.

Its subcellular location is the cell inner membrane. It catalyses the reaction K(+)(in) + H(+)(in) = K(+)(out) + H(+)(out). Responsible for the low-affinity transport of potassium into the cell. Likely operates as a K(+):H(+) symporter. The chain is Low affinity potassium transport system protein Kup from Shigella flexneri.